The primary structure comprises 272 residues: Acetylglutamate kinase (272 aa).

Residues 46-47, Arg-68, and Asn-166 each bind substrate; that span reads GA.

Belongs to the acetylglutamate kinase family. ArgB subfamily.

The protein localises to the cytoplasm. The enzyme catalyses N-acetyl-L-glutamate + ATP = N-acetyl-L-glutamyl 5-phosphate + ADP. It functions in the pathway amino-acid biosynthesis; L-arginine biosynthesis; N(2)-acetyl-L-ornithine from L-glutamate: step 2/4. Catalyzes the ATP-dependent phosphorylation of N-acetyl-L-glutamate. This chain is Acetylglutamate kinase, found in Dehalococcoides mccartyi (strain ATCC BAA-2266 / KCTC 15142 / 195) (Dehalococcoides ethenogenes (strain 195)).